We begin with the raw amino-acid sequence, 199 residues long: Large ribosomal subunit protein bL25 (199 aa).

The protein belongs to the bacterial ribosomal protein bL25 family. CTC subfamily. Part of the 50S ribosomal subunit; part of the 5S rRNA/L5/L18/L25 subcomplex. Contacts the 5S rRNA. Binds to the 5S rRNA independently of L5 and L18.

This is one of the proteins that binds to the 5S RNA in the ribosome where it forms part of the central protuberance. This Caldanaerobacter subterraneus subsp. tengcongensis (strain DSM 15242 / JCM 11007 / NBRC 100824 / MB4) (Thermoanaerobacter tengcongensis) protein is Large ribosomal subunit protein bL25.